A 363-amino-acid polypeptide reads, in one-letter code: Putative aryl-alcohol dehydrogenase AAD3 (363 aa).

The protein belongs to the aldo/keto reductase family. Aldo/keto reductase 2 subfamily.

The chain is Putative aryl-alcohol dehydrogenase AAD3 (AAD3) from Saccharomyces cerevisiae (strain ATCC 204508 / S288c) (Baker's yeast).